We begin with the raw amino-acid sequence, 478 residues long: Alpha-1,3-mannosyl-glycoprotein 4-beta-N-acetylglucosaminyltransferase C (478 aa).

The Cytoplasmic segment spans residues 1 to 25; sequence MLKFYQMKYIFQILDKMRCLRKRST. The helical; Signal-anchor for type II membrane protein transmembrane segment at 26-43 threads the bilayer; sequence VSFLGVLVVFLLFMNLYI. Residues 44–478 are Lumenal-facing; it reads EDSYVLEGDK…IIRSISIWTS (435 aa). N-linked (GlcNAc...) asparagine glycosylation is found at Asn-84 and Asn-215.

This sequence belongs to the glycosyltransferase 54 family. It depends on a divalent metal cation as a cofactor.

It localises to the golgi apparatus membrane. It catalyses the reaction N(4)-{beta-D-GlcNAc-(1-&gt;2)-alpha-D-Man-(1-&gt;3)-[beta-D-GlcNAc-(1-&gt;2)-alpha-D-Man-(1-&gt;6)]-beta-D-Man-(1-&gt;4)-beta-D-GlcNAc-(1-&gt;4)-beta-D-GlcNAc}-L-asparaginyl-[protein] + UDP-N-acetyl-alpha-D-glucosamine = N(4)-{beta-D-GlcNAc-(1-&gt;2)-[beta-D-GlcNAc-(1-&gt;4)]-alpha-D-Man-(1-&gt;3)-[beta-D-GlcNAc-(1-&gt;2)-alpha-D-Man-(1-&gt;6)]-beta-D-Man-(1-&gt;4)-beta-D-GlcNAc-(1-&gt;4)-beta-D-GlcNAc}-L-asparaginyl-[protein] + UDP + H(+). Its pathway is protein modification; protein glycosylation. Functionally, glycosyltransferase that participates in the transfer of N-acetylglucosamine (GlcNAc) to the core mannose residues of N-linked glycans. Catalyzes the formation of the GlcNAcbeta1-4 branch on the GlcNAcbeta1-2Manalpha1-3 arm of the core structure of N-linked glycans. Essential for the production of tri- and tetra-antennary N-linked sugar chains. Does not catalyze the transfer of GlcNAc to the Manalpha1-6 arm to form GlcNAcBeta1-4Manalpha1-6 linkage ('GnT-VI' activity). The sequence is that of Alpha-1,3-mannosyl-glycoprotein 4-beta-N-acetylglucosaminyltransferase C (Mgat4c) from Mus musculus (Mouse).